Here is a 383-residue protein sequence, read N- to C-terminus: tRNA (guanine-N(7)-)-methyltransferase non-catalytic subunit wuho (383 aa).

WD repeat units lie at residues 61–101, 105–144, 148–187, 191–231, and 289–329; these read NLEV…ALLL, ALAR…APPK, GHLS…DIHS, GHKE…EVLQ, and AGSW…QAES.

The protein belongs to the WD repeat TRM82 family. As to quaternary structure, forms a heterodimer with the catalytic subunit Mettl1. Interacts with mei-P26 and weakly interacts with bgcn; required for the function or formation of the mei-P26-bgcn-bam-sxl complex. Interacts with nanos; may be involved in mei-P26-dependent derepression of the BMP signaling pathway. Interacts with Myc; the interaction may be mediated by mei-P26 and may be involved in the regulation of ribosome biogenesis. In testis, it is present at high level in hub cells, a niche for germline stem cells of testis. Ubiquitously expressed in all testicular cells throughout spermatogenesis. Ubiquitously expressed in all germline and somatic cells of the ovary.

The protein resides in the nucleus. It localises to the cytoplasm. Its pathway is tRNA modification; N(7)-methylguanine-tRNA biosynthesis. Required for the Mettl1-dependent formation of N(7)-methylguanine at position 46 (m7G46) in tRNA. In the Mettl1-wuho methyltransferase complex, it is required to stabilize and induce conformational changes of the catalytic subunit. Required for binding of nanos mRNA and repression of translation by the mei-P26-bgcn-bam-sxl complex. May cooperate with mei-P26 and nanos to derepress the BMP signaling pathway. May cooperate with mei-P26 to suppress expression of a subset of microRNAs. May cooperate with mei-P26 to regulate bam expression levels in germline cells during gametogenesis. Required to promote mitosis to meiosis transition during gametogenesis. May regulate germline cell division in part by regulating ribosome biogenesis. This is tRNA (guanine-N(7)-)-methyltransferase non-catalytic subunit wuho from Drosophila mojavensis (Fruit fly).